A 438-amino-acid chain; its full sequence is Gamma-glutamyl phosphate reductase (438 aa).

The protein belongs to the gamma-glutamyl phosphate reductase family.

It is found in the cytoplasm. It catalyses the reaction L-glutamate 5-semialdehyde + phosphate + NADP(+) = L-glutamyl 5-phosphate + NADPH + H(+). Its pathway is amino-acid biosynthesis; L-proline biosynthesis; L-glutamate 5-semialdehyde from L-glutamate: step 2/2. Catalyzes the NADPH-dependent reduction of L-glutamate 5-phosphate into L-glutamate 5-semialdehyde and phosphate. The product spontaneously undergoes cyclization to form 1-pyrroline-5-carboxylate. The sequence is that of Gamma-glutamyl phosphate reductase from Prochlorococcus marinus (strain NATL1A).